A 128-amino-acid polypeptide reads, in one-letter code: MADDGVNPKAFPLADTNLSQKLMDLVQQAMNYKQLKKGANEATKTLNRGISEIIVMAADAEPLEILLHLPLLCEDKNVPYVFVRSKAALGRACGVTRPVIAASITQNEGSQLKSQIQKIKEDVEKLLI.

It belongs to the eukaryotic ribosomal protein eL8 family.

The protein localises to the nucleus. It is found in the nucleolus. In terms of biological role, binds to the 5'-stem-loop of U4 snRNA and may play a role in the late stage of spliceosome assembly. The protein undergoes a conformational change upon RNA-binding. This is Small nuclear ribonucleoprotein associated homolog 13 from Caenorhabditis elegans.